A 425-amino-acid chain; its full sequence is Pre-mRNA-splicing factor PRP46 (425 aa).

7 WD repeats span residues 111–151 (GHTG…LKVT), 154–193 (GHIMTVRDICISARHPYMFSASQDKLVKCWDLERNTVVRD), 196–235 (GTLSGVHSVDLHPSLDLIVSAGRDSVVRVWDIRSRSCVLT), 238–279 (GHRG…KTLT), 281–320 (HKRNVRDLAFNPTEFSFASACTDDIRSWKLVDGQLLTNFN), 322–360 (EALGIVNTLACNQDGVLFAGGDTGELSFFDYKTGHKFQK), and 371–410 (ESEKGVLASTFDRTGLRLLTCERDKSIKIWKHIDGATQDS).

It belongs to the WD repeat PRL1/PRL2 family. In terms of assembly, associated with the spliceosome.

The protein resides in the cytoplasm. Its subcellular location is the nucleus. Functionally, involved in pre-mRNA splicing and required for cell cycle progression at G2/M. The protein is Pre-mRNA-splicing factor PRP46 (PRP46) of Eremothecium gossypii (strain ATCC 10895 / CBS 109.51 / FGSC 9923 / NRRL Y-1056) (Yeast).